Consider the following 174-residue polypeptide: Late lactation protein B (174 aa).

An N-terminal signal peptide occupies residues 1 to 18; that stretch reads MKVLFLTIALSLFSILQA. Cys-77 and Cys-169 are joined by a disulfide.

The protein belongs to the calycin superfamily. Lipocalin family. Mammary gland specific. Secreted in milk.

The protein resides in the secreted. Functionally, probably serves a role in the transport of a small ligand released during the hydrolysis of milk fat. The polypeptide is Late lactation protein B (LLPB) (Notamacropus eugenii (Tammar wallaby)).